Consider the following 32-residue polypeptide: Cytochrome b6-f complex subunit 7 (32 aa).

A helical membrane pass occupies residues 9-27 (AVVFWVLIPVGLAGGALLL).

It belongs to the PetM family. In terms of assembly, the 4 large subunits of the cytochrome b6-f complex are cytochrome b6, subunit IV (17 kDa polypeptide, PetD), cytochrome f and the Rieske protein, while the 4 small subunits are PetG, PetL, PetM and PetN. The complex functions as a dimer.

It localises to the cellular thylakoid membrane. Its function is as follows. Component of the cytochrome b6-f complex, which mediates electron transfer between photosystem II (PSII) and photosystem I (PSI), cyclic electron flow around PSI, and state transitions. The chain is Cytochrome b6-f complex subunit 7 from Synechococcus sp. (strain CC9311).